We begin with the raw amino-acid sequence, 122 residues long: Large ribosomal subunit protein uL14 (122 aa).

It belongs to the universal ribosomal protein uL14 family. As to quaternary structure, part of the 50S ribosomal subunit. Forms a cluster with proteins L3 and L19. In the 70S ribosome, L14 and L19 interact and together make contacts with the 16S rRNA in bridges B5 and B8.

Functionally, binds to 23S rRNA. Forms part of two intersubunit bridges in the 70S ribosome. The polypeptide is Large ribosomal subunit protein uL14 (Chlamydia pneumoniae (Chlamydophila pneumoniae)).